Reading from the N-terminus, the 417-residue chain is Probable serpin E3 (417 aa).

The N-terminal stretch at 1 to 24 is a signal peptide; that stretch reads MPQLSASSLFICLWLVDLCHVANS. Residues Asn50, Asn106, Asn140, Asn147, and Asn152 are each glycosylated (N-linked (GlcNAc...) asparagine).

It belongs to the serpin family.

The protein resides in the secreted. Its function is as follows. Probable serine protease inhibitor. The protein is Probable serpin E3 (serpine3) of Danio rerio (Zebrafish).